Reading from the N-terminus, the 210-residue chain is Putative protein-lysine deacylase ABHD14B (210 aa).

A2 is modified (N-acetylalanine). Residue S91 is modified to Phosphoserine. Residues S111, D162, and H188 each act as charge relay system in the active site.

Belongs to the AB hydrolase superfamily. ABHD14 family. May interact with TAF1.

It localises to the cytoplasm. It is found in the nucleus. It catalyses the reaction L-lysyl-[protein] + acetyl-CoA = N(6)-acetyl-L-lysyl-[protein] + CoA + H(+). Functionally, acts as an atypical protein-lysine deacetylase in vitro. Catalyzes the deacetylation of lysine residues using CoA as substrate, generating acetyl-CoA and the free amine of protein-lysine residues. Additional experiments are however required to confirm the protein-lysine deacetylase activity in vivo. Has hydrolase activity towards various surrogate p-nitrophenyl (pNp) substrates, such as pNp-butyrate, pNp-acetate and pNp-octanoate in vitro, with a strong preference for pNp-acetate. May activate transcription. The sequence is that of Putative protein-lysine deacylase ABHD14B from Pongo abelii (Sumatran orangutan).